The sequence spans 434 residues: Glutamate-1-semialdehyde 2,1-aminomutase 1 (434 aa).

The residue at position 268 (lysine 268) is an N6-(pyridoxal phosphate)lysine.

This sequence belongs to the class-III pyridoxal-phosphate-dependent aminotransferase family. HemL subfamily. Homodimer. Requires pyridoxal 5'-phosphate as cofactor.

It is found in the cytoplasm. The enzyme catalyses (S)-4-amino-5-oxopentanoate = 5-aminolevulinate. It functions in the pathway porphyrin-containing compound metabolism; protoporphyrin-IX biosynthesis; 5-aminolevulinate from L-glutamyl-tRNA(Glu): step 2/2. This is Glutamate-1-semialdehyde 2,1-aminomutase 1 from Shouchella clausii (strain KSM-K16) (Alkalihalobacillus clausii).